The primary structure comprises 317 residues: Putative 2-hydroxyacid dehydrogenase SA2098 (317 aa).

NAD(+) contacts are provided by residues 155–156 (EI), 234–236 (ASR), and aspartate 260. Arginine 236 is an active-site residue. The active site involves glutamate 265. Histidine 283 serves as the catalytic Proton donor. 283 to 286 (HIGN) provides a ligand contact to NAD(+).

Belongs to the D-isomer specific 2-hydroxyacid dehydrogenase family.

The chain is Putative 2-hydroxyacid dehydrogenase SA2098 from Staphylococcus aureus (strain N315).